The sequence spans 180 residues: MGGLLLAALLALVAVPRAQAMWLGRLDPKQLLGPWYVLAVASREKSFAVEKDMKNVAGVVVTLTPENNLRLLSSQHGLQGCSQSVTELLKRNSGWVFENPSIGVLELRVLATNFRDYAIIFTQLEFGDEPFNTVELYSRREAASQEAMGLFTKWSRGLGFLSQQQAQLQKDLTCAHKILS.

A signal peptide spans 1–20 (MGGLLLAALLALVAVPRAQA). A disulfide bond links C81 and C174.

It belongs to the calycin superfamily. Lipocalin family.

It is found in the secreted. Its function is as follows. May play a role in male fertility. This chain is Epididymal-specific lipocalin-6 (LCN6), found in Macaca mulatta (Rhesus macaque).